The following is a 292-amino-acid chain: Acetylglutamate kinase (292 aa).

Substrate contacts are provided by residues 64–65 (GG), R86, and N190.

Belongs to the acetylglutamate kinase family. ArgB subfamily.

The protein resides in the cytoplasm. The catalysed reaction is N-acetyl-L-glutamate + ATP = N-acetyl-L-glutamyl 5-phosphate + ADP. Its pathway is amino-acid biosynthesis; L-arginine biosynthesis; N(2)-acetyl-L-ornithine from L-glutamate: step 2/4. Its function is as follows. Catalyzes the ATP-dependent phosphorylation of N-acetyl-L-glutamate. This Pelobacter propionicus (strain DSM 2379 / NBRC 103807 / OttBd1) protein is Acetylglutamate kinase.